Here is a 304-residue protein sequence, read N- to C-terminus: Acetyl-coenzyme A carboxylase carboxyl transferase subunit beta (304 aa).

The 270-residue stretch at 25 to 294 (VWTKCDSCGQ…PSVVESKADT (270 aa)) folds into the CoA carboxyltransferase N-terminal domain. Zn(2+) contacts are provided by Cys-29, Cys-32, Cys-48, and Cys-51. Residues 29-51 (CDSCGQVLYRAELERNLEVCPKC) form a C4-type zinc finger.

It belongs to the AccD/PCCB family. Acetyl-CoA carboxylase is a heterohexamer composed of biotin carboxyl carrier protein (AccB), biotin carboxylase (AccC) and two subunits each of ACCase subunit alpha (AccA) and ACCase subunit beta (AccD). Requires Zn(2+) as cofactor.

It localises to the cytoplasm. The enzyme catalyses N(6)-carboxybiotinyl-L-lysyl-[protein] + acetyl-CoA = N(6)-biotinyl-L-lysyl-[protein] + malonyl-CoA. It participates in lipid metabolism; malonyl-CoA biosynthesis; malonyl-CoA from acetyl-CoA: step 1/1. Component of the acetyl coenzyme A carboxylase (ACC) complex. Biotin carboxylase (BC) catalyzes the carboxylation of biotin on its carrier protein (BCCP) and then the CO(2) group is transferred by the transcarboxylase to acetyl-CoA to form malonyl-CoA. This chain is Acetyl-coenzyme A carboxylase carboxyl transferase subunit beta, found in Yersinia pestis bv. Antiqua (strain Nepal516).